The sequence spans 359 residues: MKKYLALALIAPLLISCSTTKKGDTYNEAWVKDTNGFDILMGQFAHNIENIWGFKEVVIAGPKDYVKYTDQYQTRSHINFDDGTITIETIAGTEPAAHLRRAIIKTLLMGDDPSSVDLYSDVDDITISKEPFLYGQVVDNTGQPIRWEGRASNFADYLLKNRLKSRSNGLRIIYSVTINMVPNHLDKRAHKYLGMVRQASRKYGVDESLILAIMQTESSFNPYAVSRSDALGLMQVVQHTAGKDVFRSQGKSGTPSRSFLFDPASNIDTGTAYLAMLNNVYLGGIDNPTSRRYAVITAYNGGAGSVLRVFSNDKIQAANIINTMTPGDVYQTLTTRHPSAESRRYLYKVNTAQKSYRRR.

An N-terminal signal peptide occupies residues 1-16 (MKKYLALALIAPLLIS). The N-palmitoyl cysteine moiety is linked to residue Cys17. Cys17 carries the S-diacylglycerol cysteine lipid modification.

This sequence belongs to the transglycosylase Slt family.

It localises to the cell outer membrane. The catalysed reaction is Exolytic cleavage of the (1-&gt;4)-beta-glycosidic linkage between N-acetylmuramic acid (MurNAc) and N-acetylglucosamine (GlcNAc) residues in peptidoglycan, from either the reducing or the non-reducing ends of the peptidoglycan chains, with concomitant formation of a 1,6-anhydrobond in the MurNAc residue.. Murein-degrading enzyme. May play a role in recycling of muropeptides during cell elongation and/or cell division. The chain is Membrane-bound lytic murein transglycosylase C from Escherichia coli O127:H6 (strain E2348/69 / EPEC).